Here is a 375-residue protein sequence, read N- to C-terminus: Growth/differentiation factor 8 (375 aa).

The first 23 residues, 1 to 23, serve as a signal peptide directing secretion; sequence MQKLAVYVYIYLFMQILVHPVAL. The propeptide occupies 24-266; sequence DGSSQPTENA…VTDTPKRSRR (243 aa). Asparagine 71 is a glycosylation site (N-linked (GlcNAc...) asparagine). 4 cysteine pairs are disulfide-bonded: cysteine 272–cysteine 282, cysteine 281–cysteine 340, cysteine 309–cysteine 372, and cysteine 313–cysteine 374.

Belongs to the TGF-beta family. In terms of assembly, homodimer; disulfide-linked.

The protein resides in the secreted. In terms of biological role, acts specifically as a negative regulator of skeletal muscle growth. This is Growth/differentiation factor 8 (MSTN) from Meleagris gallopavo (Wild turkey).